We begin with the raw amino-acid sequence, 1001 residues long: E3 ubiquitin-protein ligase etc-1 (1001 aa).

Positions 28–57 constitute an IQ domain; that stretch reads QEKAARKVQKFWRGHRVQHNQRLLFRAEFD. Positions 66–115 form a coiled coil; that stretch reads LEETIKMAQLLVNFYETNKDEERLVMTLSELVKLKTSDKEFEKRIRETQR. The HECT domain occupies 658-1001; sequence KVNDLKSMVR…INSGAGFELA (344 aa). Cys-969 functions as the Glycyl thioester intermediate in the catalytic mechanism.

In terms of assembly, interacts with ify-1 and cyb-1.

It catalyses the reaction S-ubiquitinyl-[E2 ubiquitin-conjugating enzyme]-L-cysteine + [acceptor protein]-L-lysine = [E2 ubiquitin-conjugating enzyme]-L-cysteine + N(6)-ubiquitinyl-[acceptor protein]-L-lysine.. It participates in protein modification; protein ubiquitination. Functionally, E3 ubiquitin-protein ligase that accepts ubiquitin from E2 ubiquitin-conjugating enzymes, such as ubc-18, in the form of a thioester and then directly transfers the ubiquitin to targeted substrates. Ubiquitinates ify-1 and cyb-1 targeting them for degradation in post-meiotic embryos. This is E3 ubiquitin-protein ligase etc-1 from Caenorhabditis elegans.